A 564-amino-acid polypeptide reads, in one-letter code: ATP-dependent RNA helicase ROK1 (564 aa).

2 disordered regions span residues 1–45 (MDIF…ESQI) and 62–87 (EDDREKTTENDSPNKEEKSGNDDGLI). 3 stretches are compositionally biased toward basic and acidic residues: residues 13 to 23 (VKKESGPKAKA), 33 to 45 (DENHKEDNNESQI), and 62 to 86 (EDDREKTTENDSPNKEEKSGNDDGL). Positions 122 to 150 (DLISRFSFDKRLLNNLIENGFTEPTPIQC) match the Q motif motif. Residues 153 to 333 (IPVALNNRDV…QSIMMDPVRV (181 aa)) enclose the Helicase ATP-binding domain. 166–173 (GPTGSGKT) serves as a coordination point for ATP. The DEAD box signature appears at 280–283 (DEAD). The Helicase C-terminal domain maps to 344 to 506 (NIEQKLIFCG…EVSEWMDKMA (163 aa)). Residues 512–564 (EKESIKNGKAHKERKQITTVPKMDKAKRRRQQEMIAASKRRKNEELSKKHFSK) are disordered. Over residues 553 to 564 (KNEELSKKHFSK) the composition is skewed to basic and acidic residues.

It belongs to the DEAD box helicase family. DDX52/ROK1 subfamily. As to quaternary structure, interacts with the U3 snoRNA and is associated with the 90S and 40S pre-ribosomes. This association requires the presence of RRP5. Also interacts with OSH3.

The protein resides in the nucleus. It is found in the nucleolus. The enzyme catalyses ATP + H2O = ADP + phosphate + H(+). Its function is as follows. ATP-dependent RNA helicase involved in 40S ribosomal subunit biogenesis. Required for the processing and cleavage of 35S pre-rRNA at sites A0, A1, and A2, leading to mature 18S rRNA. May also have a gene-specific regulatory function since it affects nuclear fusion by regulating KAR4 expression and contributes with KEM1 to ISP-1 sensitivity. This chain is ATP-dependent RNA helicase ROK1 (ROK1), found in Saccharomyces cerevisiae (strain ATCC 204508 / S288c) (Baker's yeast).